Reading from the N-terminus, the 541-residue chain is Apolipoprotein N-acyltransferase (541 aa).

Helical transmembrane passes span M21–L41, L54–L74, V89–V109, I116–C136, F157–F177, and Y189–L209. The region spanning L219–M500 is the CN hydrolase domain. Residue E265 is the Proton acceptor of the active site. Residue K350 is part of the active site. The active-site Nucleophile is the C405. The helical transmembrane segment at L506–I526 threads the bilayer.

Belongs to the CN hydrolase family. Apolipoprotein N-acyltransferase subfamily.

The protein resides in the cell inner membrane. The enzyme catalyses N-terminal S-1,2-diacyl-sn-glyceryl-L-cysteinyl-[lipoprotein] + a glycerophospholipid = N-acyl-S-1,2-diacyl-sn-glyceryl-L-cysteinyl-[lipoprotein] + a 2-acyl-sn-glycero-3-phospholipid + H(+). It participates in protein modification; lipoprotein biosynthesis (N-acyl transfer). Its function is as follows. Catalyzes the phospholipid dependent N-acylation of the N-terminal cysteine of apolipoprotein, the last step in lipoprotein maturation. The sequence is that of Apolipoprotein N-acyltransferase from Chlamydia caviae (strain ATCC VR-813 / DSM 19441 / 03DC25 / GPIC) (Chlamydophila caviae).